A 626-amino-acid chain; its full sequence is Ankyrin repeat domain-containing protein 55 (626 aa).

ANK repeat units lie at residues 25–54 (VDLA…SILE), 59–88 (EGCT…NINT), 92–124 (YGRT…IPDK), 125–156 (NGRL…EINH), 160–189 (EGMT…DPTL), 193–222 (DFKT…GPSI), 229–259 (SGKT…NLQA), 263–292 (DDRT…DSNL), and 296–325 (NEST…AEPA). A compositionally biased stretch (basic and acidic residues) spans 354-372 (KEEQKAHQKDQSRARPKEE). 3 disordered regions span residues 354 to 377 (KEEQ…TSEV), 455 to 491 (HAGL…SLEN), and 522 to 626 (QPGH…HDEN). S474 carries the post-translational modification Phosphoserine. A compositionally biased stretch (basic and acidic residues) spans 604–614 (QRGHDPPRAEE). The span at 616–626 (GGSSSPTHDEN) shows a compositional bias: polar residues.

The protein is Ankyrin repeat domain-containing protein 55 (Ankrd55) of Mus musculus (Mouse).